The following is a 232-amino-acid chain: MDLPIQDSHDSSTSPKGKQPTTAEKSATKKEDKVPVKKQKTRTVFSSTQLCVLNDRFQRQKYLSLQQMQELSNILNLSYKQVKTWFQNQRMKSKRWQKNNWLKNSNGVTQGCLVNPTGNLPMWSNQTWNNSTWSNQTQNIQSWSNHSWNTQTWCTQSWNNQAWNSPFYNCGEESLQSCMQFQPNSPASDLEAALEAAGEGLNVIQQTARYFSTPQTMDLFLNYSTNMXXEDV.

Residues 1-39 form a disordered region; sequence MDLPIQDSHDSSTSPKGKQPTTAEKSATKKEDKVPVKKQ. A compositionally biased stretch (polar residues) spans 11–25; it reads SSTSPKGKQPTTAEK. The segment covering 26–35 has biased composition (basic and acidic residues); sequence SATKKEDKVP. Tandem repeats lie at residues 123–127, 128–132, 133–137, 143–147, 148–152, 153–157, 158–162, and 163–167. The tract at residues 123-167 is 8 X repeats starting with a Trp in each unit; it reads WSNQTWNNSTWSNQTQNIQSWSNHSWNTQTWCTQSWNNQAWNSPF. The segment at 123 to 167 is sufficient for transactivation activity; the sequence is WSNQTWNNSTWSNQTQNIQSWSNHSWNTQTWCTQSWNNQAWNSPF. Residues 168-232 are sufficient for strong transactivation activity; the sequence is YNCGEESLQS…YSTNMXXEDV (65 aa).

It belongs to the Nanog homeobox family.

It is found in the nucleus. Functionally, probable transcriptional regulator. This chain is Putative homeobox protein NANOG2 (NANOGP1), found in Pan paniscus (Pygmy chimpanzee).